The chain runs to 570 residues: Proline--tRNA ligase (570 aa).

Belongs to the class-II aminoacyl-tRNA synthetase family. ProS type 1 subfamily. Homodimer.

The protein localises to the cytoplasm. The enzyme catalyses tRNA(Pro) + L-proline + ATP = L-prolyl-tRNA(Pro) + AMP + diphosphate. In terms of biological role, catalyzes the attachment of proline to tRNA(Pro) in a two-step reaction: proline is first activated by ATP to form Pro-AMP and then transferred to the acceptor end of tRNA(Pro). As ProRS can inadvertently accommodate and process non-cognate amino acids such as alanine and cysteine, to avoid such errors it has two additional distinct editing activities against alanine. One activity is designated as 'pretransfer' editing and involves the tRNA(Pro)-independent hydrolysis of activated Ala-AMP. The other activity is designated 'posttransfer' editing and involves deacylation of mischarged Ala-tRNA(Pro). The misacylated Cys-tRNA(Pro) is not edited by ProRS. This chain is Proline--tRNA ligase, found in Shewanella oneidensis (strain ATCC 700550 / JCM 31522 / CIP 106686 / LMG 19005 / NCIMB 14063 / MR-1).